The primary structure comprises 581 residues: Proline--tRNA ligase (581 aa).

This sequence belongs to the class-II aminoacyl-tRNA synthetase family. ProS type 1 subfamily. In terms of assembly, homodimer.

The protein localises to the cytoplasm. It catalyses the reaction tRNA(Pro) + L-proline + ATP = L-prolyl-tRNA(Pro) + AMP + diphosphate. Catalyzes the attachment of proline to tRNA(Pro) in a two-step reaction: proline is first activated by ATP to form Pro-AMP and then transferred to the acceptor end of tRNA(Pro). As ProRS can inadvertently accommodate and process non-cognate amino acids such as alanine and cysteine, to avoid such errors it has two additional distinct editing activities against alanine. One activity is designated as 'pretransfer' editing and involves the tRNA(Pro)-independent hydrolysis of activated Ala-AMP. The other activity is designated 'posttransfer' editing and involves deacylation of mischarged Ala-tRNA(Pro). The misacylated Cys-tRNA(Pro) is not edited by ProRS. The sequence is that of Proline--tRNA ligase from Acidovorax ebreus (strain TPSY) (Diaphorobacter sp. (strain TPSY)).